The chain runs to 203 residues: MAQQRVLPQSKETLLQSYNKRLKDDVKSIMDNFTEIIKTAKIEDETQVSRATQSEQDNYEMHVRAANIVRAGESLMKLVSDLKQFLILNDFPSVNEAINQRNQQLRSLQEECDKKLIALRDEISIDLYELEEEYYSSSYSLCDSNDLPLCEAYWREDFDMPSPESLSMPLTTATAEQSIATSQSSTPSHPHVNGHGAGPTDHS.

The stretch at 93 to 123 forms a coiled coil; it reads SVNEAINQRNQQLRSLQEECDKKLIALRDEI. A compositionally biased stretch (polar residues) spans 164–188; it reads ESLSMPLTTATAEQSIATSQSSTPS. The interval 164 to 203 is disordered; that stretch reads ESLSMPLTTATAEQSIATSQSSTPSHPHVNGHGAGPTDHS.

It belongs to the Mediator complex subunit 22 family. As to quaternary structure, component of the Mediator complex.

It localises to the nucleus. In terms of biological role, component of the Mediator complex, a coactivator involved in the regulated transcription of nearly all RNA polymerase II-dependent genes. Mediator functions as a bridge to convey information from gene-specific regulatory proteins to the basal RNA polymerase II transcription machinery. Mediator is recruited to promoters by direct interactions with regulatory proteins and serves as a scaffold for the assembly of a functional preinitiation complex with RNA polymerase II and the general transcription factors. The chain is Mediator of RNA polymerase II transcription subunit 22 (MED22) from Gallus gallus (Chicken).